We begin with the raw amino-acid sequence, 414 residues long: Diaminopimelate decarboxylase (414 aa).

Lys-52 carries the post-translational modification N6-(pyridoxal phosphate)lysine. Pyridoxal 5'-phosphate contacts are provided by residues Gly-231 and Glu-265 to Arg-268. Residues Arg-268, Arg-304, and Tyr-308 each coordinate substrate. The active-site Proton donor is Cys-334. Substrate contacts are provided by Glu-335 and Tyr-362. Tyr-362 lines the pyridoxal 5'-phosphate pocket.

It belongs to the Orn/Lys/Arg decarboxylase class-II family. LysA subfamily. Homodimer. Pyridoxal 5'-phosphate is required as a cofactor.

The enzyme catalyses meso-2,6-diaminopimelate + H(+) = L-lysine + CO2. It participates in amino-acid biosynthesis; L-lysine biosynthesis via DAP pathway; L-lysine from DL-2,6-diaminopimelate: step 1/1. Functionally, specifically catalyzes the decarboxylation of meso-diaminopimelate (meso-DAP) to L-lysine. The sequence is that of Diaminopimelate decarboxylase from Neisseria meningitidis serogroup B (strain ATCC BAA-335 / MC58).